Consider the following 108-residue polypeptide: Small ribosomal subunit protein uS17 (108 aa).

It belongs to the universal ribosomal protein uS17 family. In terms of assembly, part of the 30S ribosomal subunit.

In terms of biological role, one of the primary rRNA binding proteins, it binds specifically to the 5'-end of 16S ribosomal RNA. In Methanospirillum hungatei JF-1 (strain ATCC 27890 / DSM 864 / NBRC 100397 / JF-1), this protein is Small ribosomal subunit protein uS17.